A 209-amino-acid polypeptide reads, in one-letter code: Ubiquitin-conjugating enzyme E2 S (209 aa).

Positions 14-160 (QTIRQVMREL…ARMMTEIHAQ (147 aa)) constitute a UBC core domain. Cys-98 functions as the Glycyl thioester intermediate in the catalytic mechanism. The interval 168-194 (AVGDAKDDGGPSTKKHAGLDKKLQDKK) is disordered. Over residues 184–194 (AGLDKKLQDKK) the composition is skewed to basic and acidic residues.

This sequence belongs to the ubiquitin-conjugating enzyme family.

The enzyme catalyses S-ubiquitinyl-[E1 ubiquitin-activating enzyme]-L-cysteine + [E2 ubiquitin-conjugating enzyme]-L-cysteine = [E1 ubiquitin-activating enzyme]-L-cysteine + S-ubiquitinyl-[E2 ubiquitin-conjugating enzyme]-L-cysteine.. The protein operates within protein modification; protein ubiquitination. Functionally, catalyzes the covalent attachment of ubiquitin to other proteins. Acts as an essential factor of the anaphase promoting complex/cyclosome (APC/C), a cell cycle-regulated ubiquitin ligase that controls progression through mitosis. Acts by specifically elongating polyubiquitin chains initiated by the E2 enzyme vih/UbcH10 on APC/C substrates, enhancing the degradation of APC/C substrates by the proteasome and promoting mitotic exit. The sequence is that of Ubiquitin-conjugating enzyme E2 S from Drosophila melanogaster (Fruit fly).